We begin with the raw amino-acid sequence, 271 residues long: Ribosomal RNA small subunit methyltransferase A (271 aa).

Residues asparagine 22, leucine 24, glycine 49, glutamate 70, aspartate 96, and asparagine 116 each contribute to the S-adenosyl-L-methionine site.

It belongs to the class I-like SAM-binding methyltransferase superfamily. rRNA adenine N(6)-methyltransferase family. RsmA subfamily.

The protein resides in the cytoplasm. The catalysed reaction is adenosine(1518)/adenosine(1519) in 16S rRNA + 4 S-adenosyl-L-methionine = N(6)-dimethyladenosine(1518)/N(6)-dimethyladenosine(1519) in 16S rRNA + 4 S-adenosyl-L-homocysteine + 4 H(+). Specifically dimethylates two adjacent adenosines (A1518 and A1519) in the loop of a conserved hairpin near the 3'-end of 16S rRNA in the 30S particle. May play a critical role in biogenesis of 30S subunits. The protein is Ribosomal RNA small subunit methyltransferase A of Sphingopyxis alaskensis (strain DSM 13593 / LMG 18877 / RB2256) (Sphingomonas alaskensis).